We begin with the raw amino-acid sequence, 343 residues long: DNA-directed RNA polymerase subunit alpha (343 aa).

Residues 1-239 (MGETVTIQKN…DQLNVFVNFE (239 aa)) are alpha N-terminal domain (alpha-NTD). The segment at 255–343 (FNPAFLKKVD…ELAKRFEDHY (89 aa)) is alpha C-terminal domain (alpha-CTD).

The protein belongs to the RNA polymerase alpha chain family. Homodimer. The RNAP catalytic core consists of 2 alpha, 1 beta, 1 beta' and 1 omega subunit. When a sigma factor is associated with the core the holoenzyme is formed, which can initiate transcription.

It carries out the reaction RNA(n) + a ribonucleoside 5'-triphosphate = RNA(n+1) + diphosphate. In terms of biological role, DNA-dependent RNA polymerase catalyzes the transcription of DNA into RNA using the four ribonucleoside triphosphates as substrates. This chain is DNA-directed RNA polymerase subunit alpha, found in Bradyrhizobium diazoefficiens (strain JCM 10833 / BCRC 13528 / IAM 13628 / NBRC 14792 / USDA 110).